We begin with the raw amino-acid sequence, 169 residues long: Regulator of G-protein signaling rgs-2 (169 aa).

The 120-residue stretch at Gly-39–Val-158 folds into the RGS domain.

May be phosphorylated and activated by egl-4. Expressed in a subset of neurons including ventral cord and head- and tail-ganglia neurons. Also expressed in non-neuronal cells including pharyngeal and uterine muscles.

Functionally, weakly inhibits G protein signaling in nervous system, interacting preferentially with the G(O) subfamily member goa-1. In vitro, it acts as a GTPase activator of goa-1. Rgs-1 and rgs-2 redundantly adjust signaling when worms are fed to allow rapid induction of egg-laying behavior. Modulates chemotaxis responses by regulating negatively the sensitivity to quinine in ASH sensory neurons. This is Regulator of G-protein signaling rgs-2 (rgs-2) from Caenorhabditis elegans.